Here is a 485-residue protein sequence, read N- to C-terminus: Bifunctional protein GlmU (485 aa).

The tract at residues 1-241 (MSASDFSSAV…ARELAGVNDR (241 aa)) is pyrophosphorylase. UDP-N-acetyl-alpha-D-glucosamine is bound by residues 13 to 16 (LAAG), K27, Q84, and 89 to 90 (GT). A Mg(2+)-binding site is contributed by D114. UDP-N-acetyl-alpha-D-glucosamine contacts are provided by G151, E166, N181, and N239. N239 is a binding site for Mg(2+). The tract at residues 242–262 (VQLAEAGAELNRRTVIAAMRG) is linker. Residues 263–485 (GATIVDPATT…AAQNVHNQEG (223 aa)) are N-acetyltransferase. Residues R344 and K362 each coordinate UDP-N-acetyl-alpha-D-glucosamine. H374 acts as the Proton acceptor in catalysis. Y377 and N388 together coordinate UDP-N-acetyl-alpha-D-glucosamine. Acetyl-CoA-binding positions include A391, 397 to 398 (NY), S416, and A434. Residues 465–485 (RPGTAAAQAAEAAQNVHNQEG) form a disordered region. Residues 469 to 478 (AAAQAAEAAQ) show a composition bias toward low complexity.

It in the N-terminal section; belongs to the N-acetylglucosamine-1-phosphate uridyltransferase family. The protein in the C-terminal section; belongs to the transferase hexapeptide repeat family. Homotrimer. Mg(2+) serves as cofactor.

It localises to the cytoplasm. The enzyme catalyses alpha-D-glucosamine 1-phosphate + acetyl-CoA = N-acetyl-alpha-D-glucosamine 1-phosphate + CoA + H(+). It catalyses the reaction N-acetyl-alpha-D-glucosamine 1-phosphate + UTP + H(+) = UDP-N-acetyl-alpha-D-glucosamine + diphosphate. It participates in nucleotide-sugar biosynthesis; UDP-N-acetyl-alpha-D-glucosamine biosynthesis; N-acetyl-alpha-D-glucosamine 1-phosphate from alpha-D-glucosamine 6-phosphate (route II): step 2/2. It functions in the pathway nucleotide-sugar biosynthesis; UDP-N-acetyl-alpha-D-glucosamine biosynthesis; UDP-N-acetyl-alpha-D-glucosamine from N-acetyl-alpha-D-glucosamine 1-phosphate: step 1/1. Its pathway is bacterial outer membrane biogenesis; LPS lipid A biosynthesis. In terms of biological role, catalyzes the last two sequential reactions in the de novo biosynthetic pathway for UDP-N-acetylglucosamine (UDP-GlcNAc). The C-terminal domain catalyzes the transfer of acetyl group from acetyl coenzyme A to glucosamine-1-phosphate (GlcN-1-P) to produce N-acetylglucosamine-1-phosphate (GlcNAc-1-P), which is converted into UDP-GlcNAc by the transfer of uridine 5-monophosphate (from uridine 5-triphosphate), a reaction catalyzed by the N-terminal domain. This is Bifunctional protein GlmU from Corynebacterium glutamicum (strain R).